The sequence spans 313 residues: Uracil-DNA glycosylase (313 aa).

The interval 35–68 is disordered; sequence DEPMPKKCRRPAGPPKGFISTRGDTSPSSDNNHI. Positions 56–68 are enriched in polar residues; it reads RGDTSPSSDNNHI. Asp153 serves as the catalytic Proton acceptor.

It belongs to the uracil-DNA glycosylase (UDG) superfamily. UNG family.

It localises to the host nucleus. The enzyme catalyses Hydrolyzes single-stranded DNA or mismatched double-stranded DNA and polynucleotides, releasing free uracil.. Functionally, excises uracil residues from the DNA which can arise as a result of misincorporation of dUMP residues by DNA polymerase or deamination of cytosines. Therefore may reduce deleterious uracil incorporation into the viral genome, particularly in terminally differentiated cells which lack DNA repair enzymes. This chain is Uracil-DNA glycosylase (MDV014), found in Gallus gallus (Chicken).